Consider the following 238-residue polypeptide: Probable transglycosylase SceD 3 (238 aa).

The first 27 residues, 1 to 27 (MKKTVVASTLAVGLGVTGFAAGNSADA), serve as a signal peptide directing secretion. The disordered stretch occupies residues 82-161 (YGQGSTNAPA…SEASEGSSVN (80 aa)). Residues 89–156 (APAQETAEQP…NESSSSEASE (68 aa)) show a composition bias toward low complexity.

The protein belongs to the transglycosylase family. SceD subfamily.

It is found in the secreted. Functionally, is able to cleave peptidoglycan and affects clumping and separation of bacterial cells. In Staphylococcus saprophyticus subsp. saprophyticus (strain ATCC 15305 / DSM 20229 / NCIMB 8711 / NCTC 7292 / S-41), this protein is Probable transglycosylase SceD 3 (sceD3).